We begin with the raw amino-acid sequence, 159 residues long: Phosphopantetheine adenylyltransferase (159 aa).

Serine 8 provides a ligand contact to substrate. Residues 8-9 and histidine 16 contribute to the ATP site; that span reads SF. 3 residues coordinate substrate: lysine 40, leucine 73, and lysine 87. ATP-binding positions include 88-90, glutamate 98, and 122-128; these read GLR and YGYVSST.

Belongs to the bacterial CoaD family. As to quaternary structure, homohexamer. Mg(2+) is required as a cofactor.

Its subcellular location is the cytoplasm. It carries out the reaction (R)-4'-phosphopantetheine + ATP + H(+) = 3'-dephospho-CoA + diphosphate. The protein operates within cofactor biosynthesis; coenzyme A biosynthesis; CoA from (R)-pantothenate: step 4/5. Reversibly transfers an adenylyl group from ATP to 4'-phosphopantetheine, yielding dephospho-CoA (dPCoA) and pyrophosphate. The chain is Phosphopantetheine adenylyltransferase from Corynebacterium efficiens (strain DSM 44549 / YS-314 / AJ 12310 / JCM 11189 / NBRC 100395).